Here is a 134-residue protein sequence, read N- to C-terminus: D-ribose pyranase (134 aa).

His-20 serves as the catalytic Proton donor. Residues Asp-28, His-101, and 123-125 contribute to the substrate site; that span reads YSN.

Belongs to the RbsD / FucU family. RbsD subfamily. Homodecamer.

It is found in the cytoplasm. It catalyses the reaction beta-D-ribopyranose = beta-D-ribofuranose. The protein operates within carbohydrate metabolism; D-ribose degradation; D-ribose 5-phosphate from beta-D-ribopyranose: step 1/2. Catalyzes the interconversion of beta-pyran and beta-furan forms of D-ribose. The chain is D-ribose pyranase from Pseudomonas syringae pv. syringae (strain B728a).